A 1485-amino-acid polypeptide reads, in one-letter code: Cystic fibrosis transmembrane conductance regulator (1485 aa).

Residues 1–78 (MQRSPVEDAN…SLLRAMARCY (78 aa)) lie on the Cytoplasmic side of the membrane. The chain crosses the membrane as a helical span at residues 79 to 99 (IKPFLLFGFLLYIGEATKTVQ). Residues 83–353 (LLFGFLLYIG…CMVLRMTVTR (271 aa)) form the ABC transmembrane type-1 1 domain. Residues 100-123 (PQLLGRIIASFDPAHEPERANGYF) lie on the Extracellular side of the membrane. The helical transmembrane segment at 124–149 (LAFGLGLLFTARFLLLQPAMFGLHHL) threads the bilayer. Topologically, residues 150-195 (GMQIRIALFSIIYKKTLKLSSRVLDKISTGQLVSLMSANLGKFDQS) are cytoplasmic. Residues 196–216 (LGMAHFIWISPLQCILCTGLI) form a helical membrane-spanning segment. Residues 217–224 (WELIDVNS) are Extracellular-facing. Residues 225–245 (FCALAAISLLGVLQAFLSHKM) form a helical membrane-spanning segment. The Cytoplasmic segment spans residues 246–299 (GPYKAQKVLLTNKRLALTSEIMENLHSVKAYGWEEIMETLIKNIRQDEVKLTRK). The helical transmembrane segment at 300–320 (IGSLRYFYSSAYFFSAIFVIV) threads the bilayer. Residues 321–340 (AAVVPHALSRGINLRRIFTT) lie on the Extracellular side of the membrane. The helical transmembrane segment at 341 to 363 (LSYCMVLRMTVTRQLPGSIQMWY) threads the bilayer. Over 364–856 (DTMRLIWKIE…YVRYVSNNKS (493 aa)) the chain is Cytoplasmic. ATP-binding positions include Trp402, 457 to 464 (GSMGSGKS), and Gln492. One can recognise an ABC transporter 1 domain in the interval 424–645 (NGDAGLFFTN…RPDFSSLLLG (222 aa)). Residues 653-826 (SAERRCSILT…GILEEENIEA (174 aa)) are disordered R region. A helical transmembrane segment spans residues 857-877 (LLYVLIFILFIAAIEIAGSVA). An ABC transmembrane type-1 2 domain is found at 860 to 1163 (VLIFILFIAA…CVATSIAVDG (304 aa)). Residues 878-924 (GIFLITDELWREEHQRSEPNMTKHSNASSSGQTYAITVTPTSSYYIL) are Extracellular-facing. Asn897 and Asn903 each carry an N-linked (GlcNAc...) asparagine glycan. The chain crosses the membrane as a discontinuously helical span at residues 925-946 (YIYVATSESLLAMGFFRGLPFV). The Cytoplasmic segment spans residues 947-996 (HTTITISKKLHQKMLHAVLSAPMSVLNTMKTGRIMNRFTKDMATIDDMLP). Residues 997–1019 (LLMFDFVQLTVVVVGCILVVSIV) form a helical membrane-spanning segment. The Extracellular portion of the chain corresponds to 1020 to 1021 (RP). The helical transmembrane segment at 1022–1042 (YIFLAATPLAIIFIVMRKYFL) threads the bilayer. The Cytoplasmic portion of the chain corresponds to 1043–1103 (RTGQQLKQLE…TATWFLYLST (61 aa)). Residues 1104–1124 (LRWFLFRADILFVFFFTLAAW) form a helical membrane-spanning segment. At 1125–1138 (IAVGTNQDKPGEIG) the chain is on the extracellular side. The chain crosses the membrane as a helical span at residues 1139–1159 (IIICLAMLILGTFQWCVATSI). Over 1160–1485 (AVDGMMRSVD…AEDNIQDTRL (326 aa)) the chain is Cytoplasmic. Residues 1211–1444 (IEVRNLTVKY…TSHLKQAISP (234 aa)) form the ABC transporter 2 domain. ATP is bound by residues Tyr1220 and 1245–1252 (GRTGSGKS). The segment at 1452-1485 (PRRNSSMRTPQSKLSSVTQTLQEEAEDNIQDTRL) is disordered. The span at 1454-1473 (RNSSMRTPQSKLSSVTQTLQ) shows a compositional bias: polar residues. Residues 1474–1485 (EEAEDNIQDTRL) are compositionally biased toward acidic residues. Positions 1483–1485 (TRL) match the PDZ-binding motif.

This sequence belongs to the ABC transporter superfamily. ABCC family. CFTR transporter (TC 3.A.1.202) subfamily. Monomer; does not require oligomerization for channel activity. Interacts with cse1l; this interaction may down-regulate cftr activity. In terms of processing, phosphorylated; this activates the channel. Dephosphorylation strongly decreases ATPase activity. Phosphorylation at PKA sites activates the channel. Phosphorylation at PKC sites enhances the response to phosphorylation by PKA. Detected in gut epithelium (at protein level). Detected in kidney, spleen, intestine and liver. Detected in pancreatic duct epithelium at 5 dpf and throughout adult life.

The protein resides in the apical cell membrane. The protein localises to the early endosome membrane. It localises to the cell membrane. Its subcellular location is the recycling endosome membrane. It is found in the endoplasmic reticulum membrane. It carries out the reaction ATP + H2O + closed Cl(-) channel = ADP + phosphate + open Cl(-) channel.. The catalysed reaction is chloride(in) = chloride(out). The enzyme catalyses hydrogencarbonate(in) = hydrogencarbonate(out). It catalyses the reaction ATP + H2O = ADP + phosphate + H(+). Epithelial ion channel that plays an important role in the regulation of epithelial ion and water transport and fluid homeostasis. Mediates the transport of chloride ions across the cell membrane. Possesses an intrinsic ATPase activity and utilizes ATP to gate its channel; the passive flow of anions through the channel is gated by cycles of ATP binding and hydrolysis by the ATP-binding domains. The ion channel is also permeable to HCO(3)(-); selectivity depends on the extracellular chloride concentration. Exerts its function also by modulating the activity of other ion channels and transporters. Contributes to the regulation of the pH and the ion content of the epithelial fluid layer. Required for normal fluid homeostasis in the gut. Required for normal volume expansion and cell shape changes of Kupffer's vesicle during embryonic development and for normal establishment of left-right body patterning. Required for normal resistance to infection by P.aeruginosa strain PA14 and strain SMC573. The sequence is that of Cystic fibrosis transmembrane conductance regulator from Danio rerio (Zebrafish).